A 194-amino-acid chain; its full sequence is Fe/S biogenesis protein NfuA (194 aa).

[4Fe-4S] cluster-binding residues include cysteine 152 and cysteine 155.

The protein belongs to the NfuA family. As to quaternary structure, homodimer. Requires [4Fe-4S] cluster as cofactor.

Functionally, involved in iron-sulfur cluster biogenesis. Binds a 4Fe-4S cluster, can transfer this cluster to apoproteins, and thereby intervenes in the maturation of Fe/S proteins. Could also act as a scaffold/chaperone for damaged Fe/S proteins. The chain is Fe/S biogenesis protein NfuA from Pseudomonas fluorescens (strain SBW25).